We begin with the raw amino-acid sequence, 318 residues long: NAC domain-containing protein 68 (318 aa).

The NAC domain maps to 21 to 175; the sequence is LPPGFRFHPT…EWVLCRLYNK (155 aa).

Expressed in stems, leaf blades and callus. Weakly expressed in developing flowers.

Its subcellular location is the nucleus. Functionally, probable transcription factor involved in stress response. This is NAC domain-containing protein 68 from Oryza sativa subsp. japonica (Rice).